An 87-amino-acid chain; its full sequence is uncharacterized protein (87 aa).

Helical transmembrane passes span 25-45 (LVAA…WLGG) and 53-73 (YAFL…LVTF).

The protein localises to the cell membrane. This is an uncharacterized protein from Paracoccus denitrificans.